The sequence spans 381 residues: D-rhamnosyltransferase WbpZ (381 aa).

Substrate contacts are provided by Glu-19, His-116, Lys-206, and Val-252.

It belongs to the glycosyltransferase group 1 family. Glycosyltransferase 4 subfamily.

It localises to the cytoplasm. It catalyses the reaction GDP-alpha-D-rhamnose + N-acetyl-alpha-D-glucosaminyl-di-trans,octa-cis-undecaprenyl diphosphate = alpha-D-rhamnosyl-(1-&gt;3)-N-acetyl-alpha-D-glucosaminyl-1-diphospho-di-trans,octa-cis-undecaprenol + GDP + H(+). The enzyme catalyses GDP-alpha-D-rhamnose + N-acetyl-alpha-D-galactosaminyl-di-trans,octa-cis-undecaprenyl diphosphate = alpha-D-rhamnosyl-(1-&gt;3)-N-acetyl-alpha-D-galactosaminyl-1-diphospho-di-trans,octa-cis-undecaprenol + GDP + H(+). The catalysed reaction is N-acetyl-alpha-D-glucosaminyl-di-trans,octa-cis-undecaprenyl diphosphate + GDP-alpha-D-mannose = alpha-D-mannosyl-(1-&gt;3)-N-acetyl-alpha-D-glucosaminyl-di-trans,octa-cis-undecaprenyl diphosphate + GDP + H(+). It carries out the reaction N-acetyl-alpha-D-galactosaminyl-di-trans,octa-cis-undecaprenyl diphosphate + GDP-alpha-D-mannose = alpha-D-mannosyl-(1-&gt;3)-N-acetyl-alpha-D-galctosaminyl-1-diphospho-di-trans,octa-cis-undecaprenol + GDP + H(+). It functions in the pathway lipopolysaccharide biosynthesis; LPS oligosaccharide biosynthesis. Its activity is regulated as follows. Not activated by dithiothreitol (DTT) using GlcNAc-alpha-PO(3)-PO(3)-phenylundecyl (GlcNAc-PP-PhU) as acceptor substrate. 0.25% Triton X-100 and 0.125% NP-40 increases the activity 2.5-fold and 2-fold, respectively. 0.125% octyl glucoside has little effect on activity. Slightly increased activity with Mg(2+) and Pb(2+), while no effect with Mn(2+), Co(2+), Ni(2+), Cu(2+), Zn(2+), Ca(2+) or EDTA. Not inhibited by N-butyryl-galactosamine-alpha-benzyl or N-butyryl-glucosamine-beta-benzyl. Bis-imidazolium salts having aliphatic spacer groups with 4 or 6 carbons have little effect on activity, but spacer groups of 18-22 aliphatic carbons inhibit activity, with the most potent inhibitor being bis-imidazolium salt having a 20-carbon chain spacer length. In terms of biological role, non-processive alpha-1,3-D-rhamnosyltransferase. Catalyzes the transfer of one D-rhamnose (D-Rha) residue from donor substrate GDP-D-Rha in alpha-1-3 linkage to both GlcNAc- and GalNAc-diphosphate-lipid acceptor substrates. Is also able to transfer D-mannose (D-Man) to these acceptors at a lower level. Nucleotide sugars GDP-D-Rha, GDP-Fuc, UDP-Gal, UDP-GalNAc, UDP-GlcNAc and CMP-sialic acid cannot act as donor substrates. Only compounds with a diphosphate as the aglycone group can act as acceptor substrates. No activity is detected with compounds containing a diphosphate mimic. Fluorescent undecyl-anthracenyl group-containing compounds, such as GlcNAc-PO(3)-PO(3)-AnthrU and GalNAc-PO(3)-PO(3)-AnthrU, are also good acceptor substrates. Involved in the biosynthesis of the common polysaccharide antigen (CPA), also called A band, which is one of the two major cell surface O-antigens of the P.aeruginosa lipopolysaccharide. Involved in susceptibility to antibiotic colistin. This is D-rhamnosyltransferase WbpZ from Pseudomonas aeruginosa (strain ATCC 15692 / DSM 22644 / CIP 104116 / JCM 14847 / LMG 12228 / 1C / PRS 101 / PAO1).